Here is a 144-residue protein sequence, read N- to C-terminus: Large ribosomal subunit protein uL15 (144 aa).

Over residues 1–13 (MKLNELKPAEGSR) the composition is skewed to basic and acidic residues. The disordered stretch occupies residues 1 to 47 (MKLNELKPAEGSRKVRNRVGRGDSSGNGKTAGRGQKGQKARSKTRLG). A compositionally biased stretch (gly residues) spans 23–35 (DSSGNGKTAGRGQ).

It belongs to the universal ribosomal protein uL15 family. Part of the 50S ribosomal subunit.

Binds to the 23S rRNA. In Levilactobacillus brevis (strain ATCC 367 / BCRC 12310 / CIP 105137 / JCM 1170 / LMG 11437 / NCIMB 947 / NCTC 947) (Lactobacillus brevis), this protein is Large ribosomal subunit protein uL15.